We begin with the raw amino-acid sequence, 281 residues long: Cell growth regulator with EF hand domain protein 1 (281 aa).

The signal sequence occupies residues 1–21 (MSRWLMQMLMLPLLLLPLGQA). 2 consecutive EF-hand domains span residues 71-106 (NREQ…ALAP) and 115-150 (PVIL…APKR). The Ca(2+) site is built by D84, D86, N88, Q90, E95, D128, D130, D132, and E139. The interval 146-281 (EAPKRAESLP…HSIQLENDEI (136 aa)) is disordered. Over residues 169–184 (LLANSPLQSETQQSLG) the composition is skewed to polar residues. A compositionally biased stretch (basic and acidic residues) spans 185-213 (TKEEITSQVEAKRALEPEQEAGHHIETKV). Phosphoserine occurs at positions 217 and 228. The segment covering 234–256 (GPREDAERQVESKDNEGEAKDLP) has biased composition (basic and acidic residues).

Probably digested extracellularly by an unknown serine protease generating extremely hydrophobic bioactive peptides. In terms of tissue distribution, expressed predominantly in whole brain and kidney, with limited expression in heart, lung, liver, and skeletal muscle and no expression in spleen and testis. Also expressed in pituitary gland, adrenal gland, digestive tract, and reproductive organs.

The protein resides in the secreted. In terms of biological role, mediates cell-cell adhesion in a calcium-dependent manner. Able to inhibit growth in several cell lines. The protein is Cell growth regulator with EF hand domain protein 1 of Rattus norvegicus (Rat).